The following is a 303-amino-acid chain: Epimerase family protein YfhF (303 aa).

It belongs to the NAD(P)-dependent epimerase/dehydratase family. SDR39U1 subfamily.

This Bacillus subtilis (strain 168) protein is Epimerase family protein YfhF (yfhF).